We begin with the raw amino-acid sequence, 435 residues long: Solute carrier family 38 member 8 (435 aa).

The next 11 membrane-spanning stretches (helical) occupy residues 29–49 (AVFI…PWAF), 55–75 (VVPA…GLVI), 100–120 (IGKL…VAFL), 151–171 (FTLP…REIA), 178–198 (ILGT…YYLW), 218–240 (VFSV…SIYC), 250–270 (WALV…LTGV), 295–315 (IIVA…IVLF), 348–368 (MPLT…MPDL), 374–394 (IIGG…LICA), and 410–430 (VWGV…TAAA).

This sequence belongs to the amino acid/polyamine transporter 2 family. As to expression, expressed in fetal and adult brain, and spinal cord. In the brain, it is localized in the cell body and axon of the majority of neuronal cells and in a subset of glial cells. Found throughout the neuronal retina, with higher expression levels in the inner and outer plexiform layers and the photoreceptor layer. Very weak expression is also present in the kidneys, thymus, and testes.

The protein resides in the membrane. The protein localises to the cytoplasm. It localises to the cell cortex. Its subcellular location is the cell projection. It is found in the axon. It catalyses the reaction L-glutamine(out) = L-glutamine(in). The catalysed reaction is L-alanine(in) = L-alanine(out). The enzyme catalyses L-histidine(out) = L-histidine(in). It carries out the reaction L-aspartate(out) = L-aspartate(in). It catalyses the reaction L-arginine(in) = L-arginine(out). The catalysed reaction is L-leucine(in) = L-leucine(out). Functionally, electrogenic sodium-dependent amino acid transporter with a preference for L-glutamine, L-alanine, L-histidine, L-aspartate and L-arginine. May facilitate glutamine uptake in both excitatory and inhibitory neurons. The transport mechanism and stoichiometry remain to be elucidated. The polypeptide is Solute carrier family 38 member 8 (Homo sapiens (Human)).